The chain runs to 129 residues: Putative CC-type chemokine FPV061 (129 aa).

The protein belongs to the intercrine beta (chemokine CC) family. Highly divergent.

The sequence is that of Putative CC-type chemokine FPV061 from Fowlpox virus (strain NVSL) (FPV).